The following is a 441-amino-acid chain: uncharacterized protein (441 aa).

78-85 (GPRQAGKT) provides a ligand contact to ATP.

This is an uncharacterized protein from Mycobacterium bovis (strain ATCC BAA-935 / AF2122/97).